The sequence spans 221 residues: Ribonuclease HII (221 aa).

The RNase H type-2 domain maps to 29-220 (RRVAGVDEVG…LRDLQAGEIG (192 aa)). Residues Asp-35, Glu-36, and Asp-129 each contribute to the a divalent metal cation site. Positions 198–221 (LGPSPQHRRSFAPLRDLQAGEIGG) are disordered.

It belongs to the RNase HII family. It depends on Mn(2+) as a cofactor. Mg(2+) is required as a cofactor.

The protein resides in the cytoplasm. The catalysed reaction is Endonucleolytic cleavage to 5'-phosphomonoester.. In terms of biological role, endonuclease that specifically degrades the RNA of RNA-DNA hybrids. The polypeptide is Ribonuclease HII (Synechococcus sp. (strain JA-3-3Ab) (Cyanobacteria bacterium Yellowstone A-Prime)).